Here is a 188-residue protein sequence, read N- to C-terminus: Probable DNA-directed RNA polymerase subunit delta (188 aa).

Residues 14–83 (LSMIEVARAI…GENKWGLRSW (70 aa)) enclose the HTH HARE-type domain. Residues 119–188 (EDAIDYSADD…EDEEDEEEEE (70 aa)) form a disordered region.

It belongs to the RpoE family. As to quaternary structure, RNAP is composed of a core of 2 alpha, a beta and a beta' subunits. The core is associated with a delta subunit and one of several sigma factors.

Its function is as follows. Participates in both the initiation and recycling phases of transcription. In the presence of the delta subunit, RNAP displays an increased specificity of transcription, a decreased affinity for nucleic acids, and an increased efficiency of RNA synthesis because of enhanced recycling. The polypeptide is Probable DNA-directed RNA polymerase subunit delta (Streptococcus equi subsp. equi (strain 4047)).